The sequence spans 365 residues: uncharacterized protein (365 aa).

This is an uncharacterized protein from Archaeoglobus fulgidus (strain ATCC 49558 / DSM 4304 / JCM 9628 / NBRC 100126 / VC-16).